The following is a 388-amino-acid chain: Lipid-A-disaccharide synthase (388 aa).

It belongs to the LpxB family.

It carries out the reaction a lipid X + a UDP-2-N,3-O-bis[(3R)-3-hydroxyacyl]-alpha-D-glucosamine = a lipid A disaccharide + UDP + H(+). The protein operates within bacterial outer membrane biogenesis; LPS lipid A biosynthesis. In terms of biological role, condensation of UDP-2,3-diacylglucosamine and 2,3-diacylglucosamine-1-phosphate to form lipid A disaccharide, a precursor of lipid A, a phosphorylated glycolipid that anchors the lipopolysaccharide to the outer membrane of the cell. The polypeptide is Lipid-A-disaccharide synthase (Burkholderia pseudomallei (strain K96243)).